Here is a 249-residue protein sequence, read N- to C-terminus: tRNA (guanine-N(7)-)-methyltransferase (249 aa).

Positions 80, 105, 132, and 155 each coordinate S-adenosyl-L-methionine. Residue D155 is part of the active site. Residues K159, D191, and 228–231 contribute to the substrate site; that span reads TKFE.

This sequence belongs to the class I-like SAM-binding methyltransferase superfamily. TrmB family.

It catalyses the reaction guanosine(46) in tRNA + S-adenosyl-L-methionine = N(7)-methylguanosine(46) in tRNA + S-adenosyl-L-homocysteine. The protein operates within tRNA modification; N(7)-methylguanine-tRNA biosynthesis. In terms of biological role, catalyzes the formation of N(7)-methylguanine at position 46 (m7G46) in tRNA. This chain is tRNA (guanine-N(7)-)-methyltransferase, found in Mannheimia succiniciproducens (strain KCTC 0769BP / MBEL55E).